The chain runs to 326 residues: 3-isopropylmalate dehydrogenase (326 aa).

4 residues coordinate substrate: Arg-81, Arg-91, Arg-112, and Asp-198. Mg(2+) contacts are provided by Asp-198, Asp-222, and Asp-226. 255-267 is a binding site for NAD(+); that stretch reads GAAFDIAGKGIAN.

The protein belongs to the isocitrate and isopropylmalate dehydrogenases family. In terms of assembly, homotetramer. It depends on Mg(2+) as a cofactor. Mn(2+) serves as cofactor.

The protein localises to the cytoplasm. It catalyses the reaction (2R,3S)-3-isopropylmalate + NAD(+) = 4-methyl-2-oxopentanoate + CO2 + NADH. It functions in the pathway amino-acid biosynthesis; L-leucine biosynthesis; L-leucine from 3-methyl-2-oxobutanoate: step 3/4. Catalyzes the oxidation of 3-carboxy-2-hydroxy-4-methylpentanoate (3-isopropylmalate) to 3-carboxy-4-methyl-2-oxopentanoate. The product decarboxylates to 4-methyl-2 oxopentanoate. The polypeptide is 3-isopropylmalate dehydrogenase (leuB) (Archaeoglobus fulgidus (strain ATCC 49558 / DSM 4304 / JCM 9628 / NBRC 100126 / VC-16)).